The following is a 362-amino-acid chain: Class I histocompatibility antigen, Gogo-B*0102 alpha chain (362 aa).

Positions 1-24 (MRVTAPRTLLLLLSAALALTETWA) are cleaved as a signal peptide. An alpha-1 region spans residues 25–114 (GSHSMRYFDT…ALRYYNQSEA (90 aa)). Residues 25-308 (GSHSMRYFDT…EPSSQSTIPI (284 aa)) lie on the Extracellular side of the membrane. A glycan (N-linked (GlcNAc...) asparagine) is linked at N110. Positions 115 to 206 (GSHTFQRMFG…ENGRETLQRA (92 aa)) are alpha-2. Disulfide bonds link C125/C188 and C227/C283. The interval 207-298 (DTPKTHVTHH…GLPKPLTLRW (92 aa)) is alpha-3. Residues 209 to 295 (PKTHVTHHPI…QHEGLPKPLT (87 aa)) enclose the Ig-like C1-type domain. Residues 299-308 (EPSSQSTIPI) form a connecting peptide region. The helical transmembrane segment at 309–332 (VGIVAGLAVLAVVVIGAVVTAVIC) threads the bilayer. Residues 333 to 362 (RRKSSGGKGGSYSQAASSDSAQGSDVSLTA) lie on the Cytoplasmic side of the membrane. Residues 335 to 362 (KSSGGKGGSYSQAASSDSAQGSDVSLTA) form a disordered region. A compositionally biased stretch (low complexity) spans 343-362 (SYSQAASSDSAQGSDVSLTA).

Belongs to the MHC class I family. In terms of assembly, heterodimer of an alpha chain and a beta chain (beta-2-microglobulin).

Its subcellular location is the membrane. Involved in the presentation of foreign antigens to the immune system. This chain is Class I histocompatibility antigen, Gogo-B*0102 alpha chain, found in Gorilla gorilla gorilla (Western lowland gorilla).